The primary structure comprises 88 residues: Chaplin-F (88 aa).

Positions 1-36 (MYNPKEHFSMSRIAKGLALTSVAAAAVAGTAGVAAA) are cleaved as a signal peptide. Positions 47-87 (SPGVLSGNVVQVPVHIPVNVCGNTIDVIGLLNPAFGNECEN) constitute a Chaplin domain. Cysteines 67 and 85 form a disulfide.

This sequence belongs to the chaplin family. Short chaplin subfamily. As to quaternary structure, homodimer; disulfide linked. About 20% of ChpF isolated from cell wall forms disulfide-bonded homodimers.

Its subcellular location is the cell surface. It is found in the secreted. The protein resides in the cell wall. The protein localises to the fimbrium. One of 8 partially redundant surface-active proteins required for efficient formation of aerial mycelium; the short chaplins assemble into a hydrophobic, amyloidal fibrillar surface layer that envelopes and protects aerial hyphae and spores, presumably anchored to the long chaplins. Chaplins have an overlapping function with the surface-active SapB peptide; chaplins are essential on minimal medium while on rich medium both chaplins and SapB are required for efficient aerial hyphae formation. Chaplins are also involved in cell attachment to a hydrophobic surface. Forms amyloid fibrils in vitro probably composed of stacked beta-sheets, at low extracellular concentrations individually restores the ability to form aerial hyphae to a chaplin-deficient strain. A small chaplin extract (ChpD, ChpE, ChpF, ChpG and ChpH) self-assembles into 2 different amyloids; small fibrils at the air-water interface form an amphipathic membrane that resembles spore-surface structures involved in aerial hyphae formation, and hydrophilic fibrils in solution that resemble the fibers that attach cells to a hydrophobic surface. At the air-water interface the hydrophilic surface is in contact with water (probably equivalent to the peptidoglycan layer), while the hydrophobic face is exposed to the air, making the surface of the aerial hyphae hydrophobic. A small chaplin extract applied to a chaplin-deficient strain restores aerial hyphae formation. The small chaplin extract forms an amyloid-like structure similar to that seen on the surface of cells without rodlets (rdlA-rdlB deletions), and is highly surface active, reducing surface tension from 72 to 26 mJ/m(2), which probably allows escape of hyphae from an aqueous environment into air. ChpF alone is less surface active at pH 3.0 than at pH 10.0, it reduces the surface tension of water from 72.8 mN/m to 50 mN/m at pH 3.0 or to 37 mN/m at pH 10.0. ChpF and ChpG are sufficient to restore the rodlet layer and hydrophobicity to a strain deleted for the other 6 chaplin genes. This Streptomyces coelicolor (strain ATCC BAA-471 / A3(2) / M145) protein is Chaplin-F.